Here is a 376-residue protein sequence, read N- to C-terminus: Dihydroorotate dehydrogenase (quinone) (376 aa).

FMN contacts are provided by residues 78–82 and T102; that span reads AGFDK. K82 serves as a coordination point for substrate. 127-131 is a substrate binding site; it reads NRMGF. FMN is bound by residues N157 and N190. N190 contributes to the substrate binding site. The Nucleophile role is filled by S193. N195 provides a ligand contact to substrate. The FMN site is built by K228 and T256. 257–258 contacts substrate; sequence NT. FMN-binding positions include G286, G315, and 336 to 337; that span reads YT.

This sequence belongs to the dihydroorotate dehydrogenase family. Type 2 subfamily. As to quaternary structure, monomer. It depends on FMN as a cofactor.

It is found in the cell membrane. It catalyses the reaction (S)-dihydroorotate + a quinone = orotate + a quinol. The protein operates within pyrimidine metabolism; UMP biosynthesis via de novo pathway; orotate from (S)-dihydroorotate (quinone route): step 1/1. Functionally, catalyzes the conversion of dihydroorotate to orotate with quinone as electron acceptor. The polypeptide is Dihydroorotate dehydrogenase (quinone) (Nostoc sp. (strain PCC 7120 / SAG 25.82 / UTEX 2576)).